A 215-amino-acid chain; its full sequence is Cytochrome b6 (215 aa).

Residues 32-52 (IFYCLGGITLTCFLVQVATGF) form a helical membrane-spanning segment. C35 is a heme c binding site. Positions 86 and 100 each coordinate heme b. A run of 3 helical transmembrane segments spans residues 90 to 110 (ASMM…TGGF), 116 to 136 (LTWV…VTGY), and 186 to 206 (LHTF…FPMI). Residues H187 and H202 each coordinate heme b.

This sequence belongs to the cytochrome b family. PetB subfamily. As to quaternary structure, the 4 large subunits of the cytochrome b6-f complex are cytochrome b6, subunit IV (17 kDa polypeptide, PetD), cytochrome f and the Rieske protein, while the 4 small subunits are PetG, PetL, PetM and PetN. The complex functions as a dimer. Requires heme b as cofactor. Heme c is required as a cofactor.

The protein resides in the plastid. It localises to the chloroplast thylakoid membrane. Its function is as follows. Component of the cytochrome b6-f complex, which mediates electron transfer between photosystem II (PSII) and photosystem I (PSI), cyclic electron flow around PSI, and state transitions. The protein is Cytochrome b6 of Cucumis sativus (Cucumber).